Consider the following 530-residue polypeptide: Trigger factor (530 aa).

Residues 162 to 243 enclose the PPIase FKBP-type domain; it reads DDLVTIDLAG…VTKVCEQELP (82 aa). A disordered region spans residues 432 to 530; sequence NALELDRIQP…KTAAKDDKSK (99 aa). Basic and acidic residues-rich tracts occupy residues 459 to 478 and 501 to 512; these read SAEK…EKAP and KVVDAKSDDKPA.

Belongs to the FKBP-type PPIase family. Tig subfamily.

It is found in the cytoplasm. The enzyme catalyses [protein]-peptidylproline (omega=180) = [protein]-peptidylproline (omega=0). Functionally, involved in protein export. Acts as a chaperone by maintaining the newly synthesized protein in an open conformation. Functions as a peptidyl-prolyl cis-trans isomerase. The polypeptide is Trigger factor (Cutibacterium acnes (strain DSM 16379 / KPA171202) (Propionibacterium acnes)).